We begin with the raw amino-acid sequence, 282 residues long: ATP synthase gamma chain (282 aa).

Belongs to the ATPase gamma chain family. F-type ATPases have 2 components, CF(1) - the catalytic core - and CF(0) - the membrane proton channel. CF(1) has five subunits: alpha(3), beta(3), gamma(1), delta(1), epsilon(1). CF(0) has three main subunits: a, b and c.

The protein localises to the cell membrane. Its function is as follows. Produces ATP from ADP in the presence of a proton gradient across the membrane. The gamma chain is believed to be important in regulating ATPase activity and the flow of protons through the CF(0) complex. This is ATP synthase gamma chain from Clostridium botulinum (strain ATCC 19397 / Type A).